The sequence spans 129 residues: Large ribosomal subunit protein bL19 (129 aa).

Belongs to the bacterial ribosomal protein bL19 family.

This protein is located at the 30S-50S ribosomal subunit interface and may play a role in the structure and function of the aminoacyl-tRNA binding site. This is Large ribosomal subunit protein bL19 from Paraburkholderia phytofirmans (strain DSM 17436 / LMG 22146 / PsJN) (Burkholderia phytofirmans).